A 679-amino-acid chain; its full sequence is Enzymatic polyprotein (679 aa).

The segment at 40–130 (LHCFVDTGAS…LYEPFIQFTD (91 aa)) is protease. The active site involves Asp-45. The Reverse transcriptase domain maps to 272–452 (LKVIKPSKSP…KKINFLGLEI (181 aa)).

This sequence belongs to the caulimoviridae enzymatic polyprotein family.

The enzyme catalyses DNA(n) + a 2'-deoxyribonucleoside 5'-triphosphate = DNA(n+1) + diphosphate. Functionally, encodes for at least two polypeptides: protease (PR) and reverse transcriptase (RT). The protease processes the polyprotein in cis. Reverse transcriptase is multifunctional enzyme that converts the viral RNA genome into dsDNA in viral cytoplasmic capsids. This enzyme displays a DNA polymerase activity that can copy either DNA or RNA templates, and a ribonuclease H (RNase H) activity that cleaves the RNA strand of RNA-DNA heteroduplexes in a partially processive 3'- to 5'-endonucleasic mode. Neo-synthesized pregenomic RNA (pgRNA) are encapsidated, and reverse-transcribed inside the nucleocapsid. Partial (+)DNA is synthesized from the (-)DNA template and generates the relaxed circular DNA (RC-DNA) genome. After budding and infection, the RC-DNA migrates in the nucleus, and is converted into a plasmid-like covalently closed circular DNA (cccDNA). The chain is Enzymatic polyprotein from Cauliflower mosaic virus (strain BBC) (CaMV).